A 1391-amino-acid chain; its full sequence is MNLLNLFNPLQTAGMEEEFDAIKIGIASPETIRSWSYGEVKKPETINYRTFKPERDGLFCAKIFGPVKDYECLCGKYKRLKFKGVTCEKCGVEVTLSKVRRERMGHIELAAPVAHIWFLKSLPSRLGMVLDMTLRDIERVLYFEAFVVTDPGMTPLQRRQLLTEDDYYNKLDEYGDDFDAKMGAEGIRELLRTLNVAGEIEILRQELESTGSDTKIKKIAKRLKVLEAFHRSGMKLEWMIMDVLPVLPPDLRPLVPLDGGRFATSDLNDLYRRVINRNNRLKRLLELHAPDIIVRNEKRMLQEAVDSLLDNGRRGKAMTGANKRPLKSLADMIKGKGGRFRQNLLGKRVDYSGRSVITVGPYLRLHQCGLPKKMALELFKPFIFHKLEKQGLASTVKAAKKLVEQEVPEVWDILEEVIREHPIMLNRAPTLHRLGIQAFEPILIEGKAIQLHPLVCAAFNADFDGDQMAVHVPLSLEAQMEARTLMLASNNVLSPANGEPIIVPSQDIVLGLYYMTRDRINAKGEGSLFADVKEVHRAYHTKQVELGTKITVRLREWVKNEAGEFEPVVNRYETTVGRALLSEILPKGLPFEYVNKALKKKEISKLINASFRLCGLRDTVIFADHLMYTGFGFAAKGGISIAVDDMEIPKEKAALLAEANAEVKEIEDQYRQGLVTNGERYNKVVDIWGRAGDKIAKAMMDNLSKQKVIDRAGNEVDQESFNSIYMMADSGARGSAAQIKQLSGMRGLMAKPDGSIIETPITSNFREGLTVLQYFIATHGARKGLADTALKTANSGYLTRRLVDVTQDLVVVEDDCGTSDGFVMKAVVQGGDVIEALRDRILGRVTASDVVDPSSGETLVEAGTLLTEKLVDMIDQSGVDEVKVRTPITCKTRHGLCAHCYGRDLARGKLVNAGEAVGVIAAQSIGEPGTQLTMRTFHIGGAASRAAAASQVEAKSNGTARFSSQMRYVANNKGELVVIGRSCEVVIHDDIGRERERHKVPYGAILLVQDGMAIKAGQTLATWDPHTRPMITEHAGMVKFENVEEGVTVAKQTDDVTGLSTLVVIDGKRRSSSASKLLRPTVKLLDENGVEICIPGTSTPVSMAFPVGAVITVREGQEIGKGDVLARIPQASSKTRDITGGLPRVAELFEARVPKDAGMLAEITGTVSFGKETKGKQRLIVTDVDGVAYETLISKEKQILVHDGQVVNRGETIVDGAVDPHDILRLQGIEALARYIVQEVQEVYRLQGVKISDKHIEVIIRQMLRRVNIADAGETGFITGEQVERGDVMAANEKALEEGKEPARYENVLLGITKASLSTDSFISAASFQETTRVLTEAAIMGKQDELRGLKENVIVGRLIPAGTGLTYHRSRHQQWQEVEQETAETQVTDE.

Zn(2+) is bound by residues cysteine 72, cysteine 74, cysteine 87, and cysteine 90. Residues aspartate 462, aspartate 464, and aspartate 466 each contribute to the Mg(2+) site. Residues cysteine 816, cysteine 890, cysteine 897, and cysteine 900 each coordinate Zn(2+).

The protein belongs to the RNA polymerase beta' chain family. The RNAP catalytic core consists of 2 alpha, 1 beta, 1 beta' and 1 omega subunit. When a sigma factor is associated with the core the holoenzyme is formed, which can initiate transcription. Mg(2+) serves as cofactor. It depends on Zn(2+) as a cofactor.

The enzyme catalyses RNA(n) + a ribonucleoside 5'-triphosphate = RNA(n+1) + diphosphate. DNA-dependent RNA polymerase catalyzes the transcription of DNA into RNA using the four ribonucleoside triphosphates as substrates. This chain is DNA-directed RNA polymerase subunit beta', found in Neisseria meningitidis serogroup B (strain ATCC BAA-335 / MC58).